Consider the following 165-residue polypeptide: Cyanate hydratase (165 aa).

The disordered stretch occupies residues 1-20 (MAQNKANTVSQLQSLKNKSG). Catalysis depends on residues R90, E93, and S116.

The protein belongs to the cyanase family.

It catalyses the reaction cyanate + hydrogencarbonate + 3 H(+) = NH4(+) + 2 CO2. Its function is as follows. Catalyzes the reaction of cyanate with bicarbonate to produce ammonia and carbon dioxide. The protein is Cyanate hydratase of Medicago truncatula (Barrel medic).